A 704-amino-acid chain; its full sequence is Polyribonucleotide nucleotidyltransferase (704 aa).

Residues Asp-490 and Asp-496 each coordinate Mg(2+). A KH domain is found at 557 to 616; sequence PKIEMIQIKPAKIKDVIGKGGETINSIIDETGVKIDIDQDGNVSIASSDAEMIKKAIKII. An S1 motif domain is found at 626-694; sequence GQVYLAKVVR…KQGRVNVSRK (69 aa).

The protein belongs to the polyribonucleotide nucleotidyltransferase family. The cofactor is Mg(2+).

Its subcellular location is the cytoplasm. It carries out the reaction RNA(n+1) + phosphate = RNA(n) + a ribonucleoside 5'-diphosphate. Functionally, involved in mRNA degradation. Catalyzes the phosphorolysis of single-stranded polyribonucleotides processively in the 3'- to 5'-direction. The protein is Polyribonucleotide nucleotidyltransferase of Enterococcus faecalis (strain ATCC 700802 / V583).